The chain runs to 625 residues: Chaperone protein HtpG (625 aa).

The tract at residues 1 to 337 is a; substrate-binding; the sequence is MSTNQETRGF…TNDLPLNVSR (337 aa). Positions 338–554 are b; sequence EILQENKITA…NDEMTTQMAK (217 aa). The interval 555 to 625 is c; that stretch reads LFAAMGQKAP…FIKRMNKLLG (71 aa).

Belongs to the heat shock protein 90 family. Homodimer.

Its subcellular location is the cytoplasm. Its function is as follows. Molecular chaperone. Has ATPase activity. In Actinobacillus pleuropneumoniae serotype 5b (strain L20), this protein is Chaperone protein HtpG.